The sequence spans 600 residues: Aspartate--tRNA(Asp/Asn) ligase (600 aa).

L-aspartate is bound at residue Glu-174. Residues 198 to 201 (QLFK) are aspartate. Residue Arg-220 coordinates L-aspartate. Residues 220-222 (RDE) and Gln-229 each bind ATP. L-aspartate is bound at residue His-457. Residue Glu-491 participates in ATP binding. Position 498 (Arg-498) interacts with L-aspartate. 543–546 (GLDR) contributes to the ATP binding site.

This sequence belongs to the class-II aminoacyl-tRNA synthetase family. Type 1 subfamily. Homodimer.

It localises to the cytoplasm. The catalysed reaction is tRNA(Asx) + L-aspartate + ATP = L-aspartyl-tRNA(Asx) + AMP + diphosphate. Its function is as follows. Aspartyl-tRNA synthetase with relaxed tRNA specificity since it is able to aspartylate not only its cognate tRNA(Asp) but also tRNA(Asn). Reaction proceeds in two steps: L-aspartate is first activated by ATP to form Asp-AMP and then transferred to the acceptor end of tRNA(Asp/Asn). This Burkholderia multivorans (strain ATCC 17616 / 249) protein is Aspartate--tRNA(Asp/Asn) ligase.